We begin with the raw amino-acid sequence, 289 residues long: Protoheme IX farnesyltransferase 2 (289 aa).

A run of 9 helical transmembrane segments spans residues 4–24, 28–48, 66–86, 99–118, 124–144, 155–175, 199–219, 221–241, and 256–276; these read PGII…AAKG, LVLM…GCAI, RVTV…LALG, ALAL…VYSL, SVYG…VGYC, AILL…IAIF, LHIV…PLAG, TGIA…AMAL, and QVFG…ALDF.

The protein belongs to the UbiA prenyltransferase family. Protoheme IX farnesyltransferase subfamily.

Its subcellular location is the cell inner membrane. The catalysed reaction is heme b + (2E,6E)-farnesyl diphosphate + H2O = Fe(II)-heme o + diphosphate. It participates in porphyrin-containing compound metabolism; heme O biosynthesis; heme O from protoheme: step 1/1. Converts heme B (protoheme IX) to heme O by substitution of the vinyl group on carbon 2 of heme B porphyrin ring with a hydroxyethyl farnesyl side group. In Shewanella baltica (strain OS195), this protein is Protoheme IX farnesyltransferase 2.